Reading from the N-terminus, the 122-residue chain is Ribosome-binding factor A (122 aa).

Belongs to the RbfA family. In terms of assembly, monomer. Binds 30S ribosomal subunits, but not 50S ribosomal subunits or 70S ribosomes.

It is found in the cytoplasm. Functionally, one of several proteins that assist in the late maturation steps of the functional core of the 30S ribosomal subunit. Associates with free 30S ribosomal subunits (but not with 30S subunits that are part of 70S ribosomes or polysomes). Required for efficient processing of 16S rRNA. May interact with the 5'-terminal helix region of 16S rRNA. This Halothermothrix orenii (strain H 168 / OCM 544 / DSM 9562) protein is Ribosome-binding factor A.